Here is a 1035-residue protein sequence, read N- to C-terminus: Isoleucine--tRNA ligase (1035 aa).

Positions 48 to 58 (PTANGRPHVGH) match the 'HIGH' region motif. The short motif at 589–593 (KMSKH) is the 'KMSKS' region element. Lys592 serves as a coordination point for ATP.

It belongs to the class-I aminoacyl-tRNA synthetase family. IleS type 2 subfamily. Monomer. Requires Zn(2+) as cofactor.

Its subcellular location is the cytoplasm. The enzyme catalyses tRNA(Ile) + L-isoleucine + ATP = L-isoleucyl-tRNA(Ile) + AMP + diphosphate. In terms of biological role, catalyzes the attachment of isoleucine to tRNA(Ile). As IleRS can inadvertently accommodate and process structurally similar amino acids such as valine, to avoid such errors it has two additional distinct tRNA(Ile)-dependent editing activities. One activity is designated as 'pretransfer' editing and involves the hydrolysis of activated Val-AMP. The other activity is designated 'posttransfer' editing and involves deacylation of mischarged Val-tRNA(Ile). This is Isoleucine--tRNA ligase from Clostridium acetobutylicum (strain ATCC 824 / DSM 792 / JCM 1419 / IAM 19013 / LMG 5710 / NBRC 13948 / NRRL B-527 / VKM B-1787 / 2291 / W).